Consider the following 556-residue polypeptide: Formate--tetrahydrofolate ligase 1 (556 aa).

Residue 65–72 coordinates ATP; that stretch reads TPAGEGKS.

The protein belongs to the formate--tetrahydrofolate ligase family.

The catalysed reaction is (6S)-5,6,7,8-tetrahydrofolate + formate + ATP = (6R)-10-formyltetrahydrofolate + ADP + phosphate. It functions in the pathway one-carbon metabolism; tetrahydrofolate interconversion. The protein is Formate--tetrahydrofolate ligase 1 of Streptococcus pyogenes serotype M18 (strain MGAS8232).